The chain runs to 278 residues: C-type lectin domain family 1 member A (278 aa).

A disordered region spans residues 1 to 42; the sequence is MLAKYSSTRDMLDADGDTTMSLHSQASATSQRPELGHTEHQR. The Cytoplasmic segment spans residues 1-52; sequence MLAKYSSTRDMLDADGDTTMSLHSQASATSQRPELGHTEHQRPSSAWRPVAL. Positions 18–32 are enriched in polar residues; that stretch reads TTMSLHSQASATSQR. The helical; Signal-anchor for type II membrane protein transmembrane segment at 53–73 threads the bilayer; that stretch reads ILLTLCLVLLIGLAALGLVFF. Residues 74–278 are Extracellular-facing; the sequence is QFYQLSNTQQ…LHEPLSRRWR (205 aa). 2 N-linked (GlcNAc...) asparagine glycosylation sites follow: asparagine 95 and asparagine 169. Residues 144 to 258 enclose the C-type lectin domain; the sequence is HGDKCYQFYK…CRELRRCACE (115 aa). 2 disulfide bridges follow: cysteine 165/cysteine 257 and cysteine 236/cysteine 249.

Its subcellular location is the membrane. This Bos taurus (Bovine) protein is C-type lectin domain family 1 member A (CLEC1A).